We begin with the raw amino-acid sequence, 254 residues long: Small ribosomal subunit protein uS2 (254 aa).

Belongs to the universal ribosomal protein uS2 family.

The chain is Small ribosomal subunit protein uS2 from Oceanobacillus iheyensis (strain DSM 14371 / CIP 107618 / JCM 11309 / KCTC 3954 / HTE831).